The following is a 327-amino-acid chain: Trypsin-like protease try-5 (327 aa).

Residues 1 to 21 form the signal peptide; the sequence is MRPRIIVFLFQVLVVIKGTKL. Residues 43 to 327 enclose the Peptidase S1 domain; it reads AAGNTGNPTH…KFIVNFINQA (285 aa). Cys-73 and Cys-89 are oxidised to a cystine. Residues His-88 and Asp-173 each act as charge relay system in the active site. N-linked (GlcNAc...) asparagine glycosylation occurs at Asn-207. Cystine bridges form between Cys-242-Cys-256 and Cys-266-Cys-296. The Charge relay system role is filled by Ser-270.

It belongs to the peptidase S1 family. Specifically expressed in the male gonad including the seminal vesicle, the valve region and the vas deferens.

It is found in the secreted. The protein localises to the cytoplasmic vesicle. It localises to the secretory vesicle lumen. In the male gonad, probably maintained inactive by swm-1. Serine protease which, in males, acts as a promoting signal during mating to activate sperm. The protein is Trypsin-like protease try-5 of Caenorhabditis elegans.